An 827-amino-acid polypeptide reads, in one-letter code: Periplasmic nitrate reductase (827 aa).

Positions 1–34 (MSLTRRDFIKANAVAATAAAAGIATPAIAQPAKA) form a signal peptide, tat-type signal. In terms of domain architecture, 4Fe-4S Mo/W bis-MGD-type spans 36–92 (IRWDKGVCRFCGTGCAVLVGVQDGRVVATQGDPDSPVNRGLNCIKGYFLSKIMYGED). [4Fe-4S] cluster-binding residues include C43, C46, C50, and C78. Mo-bis(molybdopterin guanine dinucleotide) contacts are provided by residues K80, Q148, N173, C177, 210–217 (WGSNMAEM), 241–245 (STFEH), 260–262 (QTD), M371, Q375, N481, 507–508 (SD), K530, D557, and 717–726 (TGRVLEHWHS). F793 is a binding site for substrate. Mo-bis(molybdopterin guanine dinucleotide)-binding residues include N801 and K818.

It belongs to the prokaryotic molybdopterin-containing oxidoreductase family. NasA/NapA/NarB subfamily. Component of the periplasmic nitrate reductase NapAB complex composed of NapA and NapB. Requires [4Fe-4S] cluster as cofactor. The cofactor is Mo-bis(molybdopterin guanine dinucleotide). Predicted to be exported by the Tat system. The position of the signal peptide cleavage has not been experimentally proven.

It is found in the periplasm. It carries out the reaction 2 Fe(II)-[cytochrome] + nitrate + 2 H(+) = 2 Fe(III)-[cytochrome] + nitrite + H2O. Catalytic subunit of the periplasmic nitrate reductase complex NapAB. Receives electrons from NapB and catalyzes the reduction of nitrate to nitrite. The protein is Periplasmic nitrate reductase of Paramagnetospirillum magneticum (strain ATCC 700264 / AMB-1) (Magnetospirillum magneticum).